The chain runs to 624 residues: Chaperone protein HtpG (624 aa).

An a; substrate-binding region spans residues 1-336 (MKGQETRGFQ…SSDLPLNVSR (336 aa)). The interval 337 to 552 (EILQDSTVTR…ADEMSTQMAK (216 aa)) is b. A c region spans residues 553 to 624 (LFAAAGQKVP…IRRMNQLLVS (72 aa)).

This sequence belongs to the heat shock protein 90 family. As to quaternary structure, homodimer.

It localises to the cytoplasm. Its function is as follows. Molecular chaperone. Has ATPase activity. The sequence is that of Chaperone protein HtpG from Escherichia coli O1:K1 / APEC.